The chain runs to 228 residues: Odorant-binding protein 47 (228 aa).

6 cysteine pairs are disulfide-bonded: Cys-60-Cys-225, Cys-73-Cys-215, Cys-74-Cys-204, Cys-88-Cys-114, Cys-110-Cys-185, and Cys-158-Cys-195. Residue Asn-117 is glycosylated (N-linked (GlcNAc...) asparagine).

This sequence belongs to the PBP/GOBP family. Glycosylated. In terms of tissue distribution, head without antennae (at protein level).

It is found in the secreted. Functionally, present in the aqueous fluid surrounding olfactory sensory dendrites and are thought to aid in the capture and transport of hydrophobic odorants into and through this fluid. Binds N-phenyl-1-naphthylamine, menthol, citronellal, 1-dodecanol, decanal, p-tert-butylbenzophenone, 4-hydroxy-4'-isopropylazobenzene, 2-pyrrolyl-p-methyl-azobenzene and indole. Expressed in mosquito head but barely detectable in antennae, which suggests that it may be present in mouth structures, such as palpi and proboscis, and may have a function in taste. The polypeptide is Odorant-binding protein 47 (Anopheles gambiae (African malaria mosquito)).